The following is a 429-amino-acid chain: Ribosomal RNA small subunit methyltransferase B (429 aa).

S-adenosyl-L-methionine-binding positions include 254–260 (CAGPGGK), Asp277, Asp303, and Asp322. The active-site Nucleophile is the Cys375.

The protein belongs to the class I-like SAM-binding methyltransferase superfamily. RsmB/NOP family.

Its subcellular location is the cytoplasm. It catalyses the reaction cytidine(967) in 16S rRNA + S-adenosyl-L-methionine = 5-methylcytidine(967) in 16S rRNA + S-adenosyl-L-homocysteine + H(+). In terms of biological role, specifically methylates the cytosine at position 967 (m5C967) of 16S rRNA. This chain is Ribosomal RNA small subunit methyltransferase B, found in Escherichia coli O6:K15:H31 (strain 536 / UPEC).